Reading from the N-terminus, the 203-residue chain is Glycerol-3-phosphate acyltransferase (203 aa).

The next 4 membrane-spanning stretches (helical) occupy residues 6–26, 82–102, 118–138, and 141–161; these read LTLLMIVAAYLAGSVSSAVLV, AISLGLIAIAACLGHIYPVFF, APIGDDLAICLMASWVVLVLI, and YSSLAAIITALLAPLYTWWLD.

This sequence belongs to the PlsY family. Probably interacts with PlsX.

The protein resides in the cell inner membrane. The enzyme catalyses an acyl phosphate + sn-glycerol 3-phosphate = a 1-acyl-sn-glycero-3-phosphate + phosphate. Its pathway is lipid metabolism; phospholipid metabolism. Functionally, catalyzes the transfer of an acyl group from acyl-phosphate (acyl-PO(4)) to glycerol-3-phosphate (G3P) to form lysophosphatidic acid (LPA). This enzyme utilizes acyl-phosphate as fatty acyl donor, but not acyl-CoA or acyl-ACP. This Shewanella oneidensis (strain ATCC 700550 / JCM 31522 / CIP 106686 / LMG 19005 / NCIMB 14063 / MR-1) protein is Glycerol-3-phosphate acyltransferase.